Consider the following 275-residue polypeptide: Diaminopimelate epimerase (275 aa).

Substrate-binding residues include Asn-12, Gln-45, and Asn-65. The active-site Proton donor is the Cys-74. Residues 75–76 (GN), Asn-158, Asn-191, and 209–210 (ER) contribute to the substrate site. Cys-218 functions as the Proton acceptor in the catalytic mechanism. 219-220 (GT) provides a ligand contact to substrate.

This sequence belongs to the diaminopimelate epimerase family. As to quaternary structure, homodimer.

Its subcellular location is the cytoplasm. The enzyme catalyses (2S,6S)-2,6-diaminopimelate = meso-2,6-diaminopimelate. The protein operates within amino-acid biosynthesis; L-lysine biosynthesis via DAP pathway; DL-2,6-diaminopimelate from LL-2,6-diaminopimelate: step 1/1. Its function is as follows. Catalyzes the stereoinversion of LL-2,6-diaminopimelate (L,L-DAP) to meso-diaminopimelate (meso-DAP), a precursor of L-lysine and an essential component of the bacterial peptidoglycan. The polypeptide is Diaminopimelate epimerase (Shewanella oneidensis (strain ATCC 700550 / JCM 31522 / CIP 106686 / LMG 19005 / NCIMB 14063 / MR-1)).